Reading from the N-terminus, the 555-residue chain is Oxamate carbamoyltransferase subunit AllF (555 aa).

Belongs to the AllF family. In terms of assembly, the OXTCase is composed of 3 subunits, AllF, AllG and AllH. Mg(2+) serves as cofactor.

The enzyme catalyses oxamate + carbamoyl phosphate = N-carbamoyl-2-oxoglycine + phosphate. It participates in nitrogen metabolism; (S)-allantoin degradation. Functionally, component of a carbamoyltransferase involved in the anaerobic nitrogen utilization via the assimilation of allantoin. Catalyzes the conversion of oxalurate (N-carbamoyl-2-oxoglycine) to oxamate and carbamoyl phosphate. This Escherichia coli (strain K12) protein is Oxamate carbamoyltransferase subunit AllF.